A 284-amino-acid chain; its full sequence is MSVEKAKAYWQLMRMDRPIGTLLLLWPTLWALIIAAEGTPDWHVLLVFVLGVVLMRSAGCVINDFADRKVDGHVKRTQQRPLPSGRVTAKEAIILFLLLGISSFLLVLTMNPLTIQLSFAGIVLAFIYPFMKRYTHLPQLFLGLAFSWAIPMAWAAQANELPWVVWFVFAINALWTIAYDTQYAMVDRDDDVHIGVKSTAILFGRHDKLIIGLLQLLTLVMLVWLGLHYQLGQSFYWSVLAAGALFVYQQHLIRHRQRELCFQAFLNNNYVGMVLALGLFVAFW.

The next 8 helical transmembrane spans lie at 18-38, 42-62, 93-113, 136-156, 161-181, 209-229, 233-253, and 264-284; these read PIGT…AAEG, WHVL…GCVI, IILF…MNPL, HLPQ…AWAA, LPWV…AYDT, LIIG…GLHY, QSFY…QHLI, and AFLN…VAFW.

Belongs to the UbiA prenyltransferase family. It depends on Mg(2+) as a cofactor.

It localises to the cell inner membrane. The enzyme catalyses all-trans-octaprenyl diphosphate + 4-hydroxybenzoate = 4-hydroxy-3-(all-trans-octaprenyl)benzoate + diphosphate. It functions in the pathway cofactor biosynthesis; ubiquinone biosynthesis. In terms of biological role, catalyzes the prenylation of para-hydroxybenzoate (PHB) with an all-trans polyprenyl group. Mediates the second step in the final reaction sequence of ubiquinone-8 (UQ-8) biosynthesis, which is the condensation of the polyisoprenoid side chain with PHB, generating the first membrane-bound Q intermediate 3-octaprenyl-4-hydroxybenzoate. This is 4-hydroxybenzoate octaprenyltransferase from Vibrio vulnificus (strain CMCP6).